The sequence spans 80 residues: Putative membrane protein insertion efficiency factor (80 aa).

It belongs to the UPF0161 family.

The protein resides in the cell inner membrane. Functionally, could be involved in insertion of integral membrane proteins into the membrane. The sequence is that of Putative membrane protein insertion efficiency factor from Picosynechococcus sp. (strain ATCC 27264 / PCC 7002 / PR-6) (Agmenellum quadruplicatum).